The chain runs to 84 residues: Agaphelin (84 aa).

A signal peptide spans 1-26 (MKMRVHLLAVSVLLVVLALQTTPAEA). The Kazal-like domain maps to 29 to 82 (NSEMATCACQLIYRPVCASNNESYSNECVLKCASETPTGRSIGLHKVKDGNCNG). Intrachain disulfides connect Cys35–Cys60, Cys37–Cys56, and Cys45–Cys80. A glycan (N-linked (GlcNAc...) asparagine) is linked at Asn49.

As to quaternary structure, interacts with human ELANE.

The protein localises to the secreted. In terms of biological role, functions as a slow and tight inhibitor of host neutrophil elastase (ELANE). Inhibits host proteinase 3 (PRTN3) and chymotrypsin. Does not inhibit other host proteases involved in coagulation or inflammation, such as cathepsin G (CTSG), trypsin, chymase, matriptase, beta-tryptase, kallikrein, urokinase-type plasminogen activator (PLAU), coagulation factors Xa (F10), XIa (F11), XIIa (F12), plasmin (PLG), thrombin (F2) and tissue-type plasminogen activator (PLAT). Inhibits host neutrophil chemotaxis induced by N-formylmethionine-leucyl-phenylalanine (fMLP) in vitro. Inhibits ELANE-mediated potentiation of platelet aggregation induced by CTSG in the host. Does not affect CTSG- or collagen-induced platelet aggregation. Blocks cleavage of tissue factor pathway inhibitor (TFPI) by ELANE in the host. Inhibits neutrophil-induced coagulation in the host by interfering with neutrophil extracellular traps (NET) formation. Exhibits anti-inflammatory activity. Reduces ischemia-induced activation of MAPK and NF-kappa-B pathways in the host. Decreases CCL2 and IL8 production in IL4- or lipopolysaccharide (LPS)-stimulated host epithelial cells. Reduces caspase-3 (CASP3)-dependent apoptosis in damaged host tissues. The chain is Agaphelin from Anopheles gambiae (African malaria mosquito).